Consider the following 153-residue polypeptide: S-ribosylhomocysteine lyase (153 aa).

Positions 57, 61, and 124 each coordinate Fe cation.

Belongs to the LuxS family. Homodimer. Fe cation is required as a cofactor.

It carries out the reaction S-(5-deoxy-D-ribos-5-yl)-L-homocysteine = (S)-4,5-dihydroxypentane-2,3-dione + L-homocysteine. Its function is as follows. Involved in the synthesis of autoinducer 2 (AI-2) which is secreted by bacteria and is used to communicate both the cell density and the metabolic potential of the environment. The regulation of gene expression in response to changes in cell density is called quorum sensing. Catalyzes the transformation of S-ribosylhomocysteine (RHC) to homocysteine (HC) and 4,5-dihydroxy-2,3-pentadione (DPD). This is S-ribosylhomocysteine lyase from Oceanobacillus iheyensis (strain DSM 14371 / CIP 107618 / JCM 11309 / KCTC 3954 / HTE831).